Here is a 119-residue protein sequence, read N- to C-terminus: Large ribosomal subunit protein uL18 (119 aa).

A disordered region spans residues 1–24 (MITKQDKNQVRKKRHARVRSKISG). The segment covering 10-20 (VRKKRHARVRS) has biased composition (basic residues).

This sequence belongs to the universal ribosomal protein uL18 family. Part of the 50S ribosomal subunit; part of the 5S rRNA/L5/L18/L25 subcomplex. Contacts the 5S and 23S rRNAs.

Its function is as follows. This is one of the proteins that bind and probably mediate the attachment of the 5S RNA into the large ribosomal subunit, where it forms part of the central protuberance. The chain is Large ribosomal subunit protein uL18 from Lysinibacillus sphaericus (strain C3-41).